Consider the following 689-residue polypeptide: Glycine--tRNA ligase beta subunit (689 aa).

Belongs to the class-II aminoacyl-tRNA synthetase family. In terms of assembly, tetramer of two alpha and two beta subunits.

It localises to the cytoplasm. It catalyses the reaction tRNA(Gly) + glycine + ATP = glycyl-tRNA(Gly) + AMP + diphosphate. This chain is Glycine--tRNA ligase beta subunit, found in Shewanella sp. (strain W3-18-1).